Here is a 361-residue protein sequence, read N- to C-terminus: Alanine racemase 2 (361 aa).

Residue Lys30 is the Proton acceptor; specific for D-alanine of the active site. N6-(pyridoxal phosphate)lysine is present on Lys30. Residue Arg122 participates in substrate binding. Tyr256 serves as the catalytic Proton acceptor; specific for L-alanine. Residue Met303 participates in substrate binding.

Belongs to the alanine racemase family. It depends on pyridoxal 5'-phosphate as a cofactor.

It carries out the reaction L-alanine = D-alanine. Its pathway is amino-acid biosynthesis; D-alanine biosynthesis; D-alanine from L-alanine: step 1/1. Functionally, catalyzes the interconversion of L-alanine and D-alanine. May also act on other amino acids. The polypeptide is Alanine racemase 2 (alr2) (Staphylococcus aureus (strain COL)).